We begin with the raw amino-acid sequence, 384 residues long: NAD-capped RNA hydrolase NPY1 (384 aa).

Cys179, Cys182, Cys197, and Cys206 together coordinate Zn(2+). The Nudix hydrolase domain occupies 219–351 (PRTDPTVIIA…AGGYRVPFKN (133 aa)). The Mg(2+) site is built by Ala256, Glu272, Glu276, and Glu322. Substrate contacts are provided by residues 256–258 (AGF), Glu272, Glu276, and Glu322. A Nudix box motif is present at residues 257–278 (GFMEPSETIEEACIREIWEETG). A Microbody targeting signal motif is present at residues 378–380 (KTS).

It belongs to the Nudix hydrolase family. NudC subfamily. In terms of assembly, homodimer. Requires Mg(2+) as cofactor. Zn(2+) is required as a cofactor.

Its subcellular location is the peroxisome. It carries out the reaction a 5'-end NAD(+)-phospho-ribonucleoside in mRNA + H2O = a 5'-end phospho-adenosine-phospho-ribonucleoside in mRNA + beta-nicotinamide D-ribonucleotide + 2 H(+). It catalyses the reaction NAD(+) + H2O = beta-nicotinamide D-ribonucleotide + AMP + 2 H(+). The catalysed reaction is NADH + H2O = reduced beta-nicotinamide D-ribonucleotide + AMP + 2 H(+). In terms of biological role, mRNA decapping enzyme that specifically removes the nicotinamide adenine dinucleotide (NAD) cap from a subset of mRNAs by hydrolyzing the diphosphate linkage to produce nicotinamide mononucleotide (NMN) and 5' monophosphate mRNA. The NAD-cap is present at the 5'-end of some RNAs; in contrast to the canonical N7 methylguanosine (m7G) cap, the NAD cap promotes mRNA decay. Mediates the hydrolysis of some nucleoside diphosphate derivatives. The polypeptide is NAD-capped RNA hydrolase NPY1 (Saccharomyces cerevisiae (strain ATCC 204508 / S288c) (Baker's yeast)).